The primary structure comprises 430 residues: L-cysteine:1D-myo-inositol 2-amino-2-deoxy-alpha-D-glucopyranoside ligase (430 aa).

C48 contributes to the Zn(2+) binding site. L-cysteinyl-5'-AMP is bound by residues 48–51 (CGIT), T63, and 86–88 (NIT). The 'HIGH' region motif lies at 50 to 60 (ITPYDSTHLGH). Positions 192 to 197 (ERGGDP) match the 'ERGGDP' region motif. W232 lines the L-cysteinyl-5'-AMP pocket. Position 236 (C236) interacts with Zn(2+). 254–256 (GSD) contacts L-cysteinyl-5'-AMP. H261 is a binding site for Zn(2+). L-cysteinyl-5'-AMP is bound at residue I288. Residues 294-298 (KMSKS) carry the 'KMSKS' region motif.

It belongs to the class-I aminoacyl-tRNA synthetase family. MshC subfamily. As to quaternary structure, monomer. Requires Zn(2+) as cofactor.

It carries out the reaction 1D-myo-inositol 2-amino-2-deoxy-alpha-D-glucopyranoside + L-cysteine + ATP = 1D-myo-inositol 2-(L-cysteinylamino)-2-deoxy-alpha-D-glucopyranoside + AMP + diphosphate + H(+). Catalyzes the ATP-dependent condensation of GlcN-Ins and L-cysteine to form L-Cys-GlcN-Ins. The polypeptide is L-cysteine:1D-myo-inositol 2-amino-2-deoxy-alpha-D-glucopyranoside ligase (mshC) (Corynebacterium efficiens (strain DSM 44549 / YS-314 / AJ 12310 / JCM 11189 / NBRC 100395)).